The following is a 294-amino-acid chain: RAB7A-interacting MON1-CCZ1 complex subunit 1 (294 aa).

Ala-2 bears the N-acetylalanine mark.

The protein belongs to the RIMOC1 family. Interacts with the MON1A-CCZ1B complex. Interacts with GDP-bound RAB7A and promotes its interaction with the MON1A-CCZ1B complex.

The protein localises to the cytoplasm. It localises to the cytosol. Plays an important role in the removal of damaged mitochondria via mitophagy by controlling the stability and localization of RAB7A. Required for the recruitment of RAB7A and ATG9A vesicles to damaged mitochondria and promotes the stability of RAB7A by inhibiting its proteasomal degradation during mitophagy. This Mus musculus (Mouse) protein is RAB7A-interacting MON1-CCZ1 complex subunit 1.